A 306-amino-acid polypeptide reads, in one-letter code: S-methyl-5'-thioadenosine phosphorylase (306 aa).

Residues threonine 21, 63–64 (RH), and 96–97 (SA) each bind phosphate. Methionine 198 contacts substrate. Phosphate is bound at residue serine 199. Residue 222 to 224 (DYD) participates in substrate binding.

This sequence belongs to the PNP/MTAP phosphorylase family. MTAP subfamily. In terms of assembly, homotrimer.

It localises to the cytoplasm. It is found in the nucleus. It carries out the reaction S-methyl-5'-thioadenosine + phosphate = 5-(methylsulfanyl)-alpha-D-ribose 1-phosphate + adenine. It functions in the pathway amino-acid biosynthesis; L-methionine biosynthesis via salvage pathway; S-methyl-5-thio-alpha-D-ribose 1-phosphate from S-methyl-5'-thioadenosine (phosphorylase route): step 1/1. Its function is as follows. Catalyzes the reversible phosphorylation of S-methyl-5'-thioadenosine (MTA) to adenine and 5-methylthioribose-1-phosphate. Involved in the breakdown of MTA, a major by-product of polyamine biosynthesis. Responsible for the first step in the methionine salvage pathway after MTA has been generated from S-adenosylmethionine. Has broad substrate specificity with 6-aminopurine nucleosides as preferred substrates. This chain is S-methyl-5'-thioadenosine phosphorylase, found in Sclerotinia sclerotiorum (strain ATCC 18683 / 1980 / Ss-1) (White mold).